Here is a 268-residue protein sequence, read N- to C-terminus: Type II methyltransferase M2.DpnII (268 aa).

It belongs to the N(4)/N(6)-methyltransferase family. In terms of assembly, homodimer.

It carries out the reaction a 2'-deoxyadenosine in DNA + S-adenosyl-L-methionine = an N(6)-methyl-2'-deoxyadenosine in DNA + S-adenosyl-L-homocysteine + H(+). A beta subtype methylase that recognizes the single- or double-stranded sequence 5'-GATC-3', methylates A-2 on one or both strands (respectively), and protects the DNA from cleavage by the DpnII endonuclease. Further methylates DNA that is already methylated at 5'-GATC-3' sites. Essential for establishment of a previously unmethylated plasmid transformed into the cell as single-stranded DNA, enhances plasmid transfer to DpnII-containing strains of Streptococcus pneumoniae. The protein is Type II methyltransferase M2.DpnII of Streptococcus pneumoniae.